Consider the following 606-residue polypeptide: Zinc finger protein 214 (606 aa).

The KRAB domain occupies 3–83; sequence VTFEDVTIIF…GAQMYENQNY (81 aa). A C2H2-type 1; degenerate zinc finger spans residues 275–297; it reads YGCDEVDGNFHQSSGVHFHQRVH. A C2H2-type 2 zinc finger spans residues 303–325; sequence YSCNACGKSFSQISSLHNHQRVH. The C2H2-type 3; degenerate zinc finger occupies 330–352; the sequence is FYKIECDKDLSRNSLLHIHQRLH. 8 C2H2-type zinc fingers span residues 358 to 380, 386 to 408, 414 to 436, 442 to 464, 470 to 492, 498 to 520, 526 to 548, and 554 to 576; these read FKCN…QRVH, YKCD…QLVH, YKCE…QRVH, YKCD…QRVH, YTCP…QRVH, YKCH…QRVH, and YQCA…QRVH.

Belongs to the krueppel C2H2-type zinc-finger protein family.

It localises to the nucleus. May be involved in transcriptional regulation. The polypeptide is Zinc finger protein 214 (ZNF214) (Homo sapiens (Human)).